The following is a 1015-amino-acid chain: Putative ankyrin repeat protein R96 (1015 aa).

The segment covering 1–14 has biased composition (basic residues); that stretch reads MSTVKKSSKKKSSK. The segment at 1–37 is disordered; the sequence is MSTVKKSSKKKSSKKSSSGNESSKKSSPKIVPKHTAK. ANK repeat units lie at residues 136-165, 168-201, 202-231, 340-370, 374-403, 456-485, 498-527, and 535-564; these read NGHK…NIDF, APSN…AVNI, DGRS…DVEV, LGHN…DFQA, NITN…KIVS, SGYR…TIFA, NNND…QFQL, and TVPT…ITDC.

In Acanthamoeba polyphaga mimivirus (APMV), this protein is Putative ankyrin repeat protein R96.